The following is a 908-amino-acid chain: NADH-quinone oxidoreductase subunit G (908 aa).

The 2Fe-2S ferredoxin-type domain occupies 2–83 (ATIHVDGKEY…GTFISIDDEE (82 aa)). [2Fe-2S] cluster is bound by residues Cys34, Cys45, Cys48, and Cys67. In terms of domain architecture, 4Fe-4S His(Cys)3-ligated-type spans 83–122 (EAKQFRESVVEWLMTNHPHDCPVCEEGGNCHLQDMTVMTG). 12 residues coordinate [4Fe-4S] cluster: His99, Cys103, Cys106, Cys112, Cys151, Cys154, Cys157, Cys201, Cys228, Cys231, Cys235, and Cys263. Residues 221-277 (MQFAPSICQQCSIGCNISPGERYGELRRIENRYNGTVNHYFLCDRGRFGYGYVNLKD) enclose the 4Fe-4S Mo/W bis-MGD-type domain.

This sequence belongs to the complex I 75 kDa subunit family. In terms of assembly, composed of 13 different subunits. Subunits NuoCD, E, F, and G constitute the peripheral sector of the complex. [2Fe-2S] cluster serves as cofactor. Requires [4Fe-4S] cluster as cofactor.

The catalysed reaction is a quinone + NADH + 5 H(+)(in) = a quinol + NAD(+) + 4 H(+)(out). In terms of biological role, NDH-1 shuttles electrons from NADH, via FMN and iron-sulfur (Fe-S) centers, to quinones in the respiratory chain. The immediate electron acceptor for the enzyme in this species is believed to be ubiquinone. Couples the redox reaction to proton translocation (for every two electrons transferred, four hydrogen ions are translocated across the cytoplasmic membrane), and thus conserves the redox energy in a proton gradient. This is NADH-quinone oxidoreductase subunit G (nuoG) from Escherichia coli O6:H1 (strain CFT073 / ATCC 700928 / UPEC).